We begin with the raw amino-acid sequence, 444 residues long: Transcription factor PIF5 (444 aa).

Positions 26–39 are involved in interaction with phyB; it reads EDELVELLWRDGQV. Disordered stretches follow at residues 154 to 265 and 416 to 444; these read HCGS…NLSE and MLGF…GKIG. A compositionally biased stretch (polar residues) spans 155-171; it reads CGSNQSTNIHQATTLPV. Over residues 175–185 the composition is skewed to basic and acidic residues; the sequence is DRSKNVEERLD. The segment covering 187–197 has biased composition (low complexity); it reads SSGGSSGCSYG. The span at 224 to 244 shows a compositional bias: polar residues; sequence ESVSQSDIGLTSTDDQTMGNK. The segment covering 256 to 265 has biased composition (basic and acidic residues); sequence RAAEVHNLSE. The bHLH domain maps to 256–305; sequence RAAEVHNLSERRRRDRINERMKALQELIPHCSRTDKASILDEAIDYLKSL. The segment covering 424–437 has biased composition (polar residues); it reads GPQSQLSAPATTDS. Position 437 is a phosphoserine (S437).

Homodimer. Interacts specifically with the Pfr form of phytochrome B and with TOC1/APRR1. May form a heterodimer with PIF3. Interacts with PHYB, CRY1 and CRY2 in the nucleus in response to low blue light (LBL). Interacts with TOPP4. Associates to PTAC12/HMR/PAP5 which acts as a transcriptional coactivator. Post-translationally, phosphorylated. Additional phosphorylations induced within 60 seconds following phytochrome B photoactivation. In terms of processing, dephosphorylated by TOPP4 during photomorphogenesis, leading to subsequent degradation of PIF5 by the proteasomal pathway. Mainly expressed in leaves and seedlings, and, to a lower extent, in stems, fruits, flowers and roots.

Its subcellular location is the nucleus. In terms of biological role, transcription factor acting negatively in the phytochrome B signaling pathway to promote the shade-avoidance response. Regulates PHYB abundance at the post-transcriptional level, possibly via the ubiquitin-proteasome pathway. Promotes ethylene activity in the dark. May regulate the expression of a subset of genes by binding to the G-box motif. Might be involved in the integration of light-signals to control both circadian and photomorphogenic processes. Activated by CRY1 and CRY2 in response to low blue light (LBL) by direct binding at chromatin on E-box variant 5'-CA[CT]GTG-3' to stimulate specific gene expression to adapt global physiology (e.g. hypocotyl elongation in low blue light). This Arabidopsis thaliana (Mouse-ear cress) protein is Transcription factor PIF5.